Consider the following 144-residue polypeptide: Large ribosomal subunit protein uL11 (144 aa).

Belongs to the universal ribosomal protein uL11 family. As to quaternary structure, part of the ribosomal stalk of the 50S ribosomal subunit. Interacts with L10 and the large rRNA to form the base of the stalk. L10 forms an elongated spine to which L12 dimers bind in a sequential fashion forming a multimeric L10(L12)X complex. One or more lysine residues are methylated.

Functionally, forms part of the ribosomal stalk which helps the ribosome interact with GTP-bound translation factors. This is Large ribosomal subunit protein uL11 from Granulibacter bethesdensis (strain ATCC BAA-1260 / CGDNIH1).